We begin with the raw amino-acid sequence, 176 residues long: Large ribosomal subunit protein uL6 (176 aa).

A compositionally biased stretch (basic and acidic residues) spans 151 to 170 (RPPEPYKGKGVRYADEQVRR). The tract at residues 151–176 (RPPEPYKGKGVRYADEQVRRKEAKKK) is disordered.

This sequence belongs to the universal ribosomal protein uL6 family. Part of the 50S ribosomal subunit.

Its function is as follows. This protein binds to the 23S rRNA, and is important in its secondary structure. It is located near the subunit interface in the base of the L7/L12 stalk, and near the tRNA binding site of the peptidyltransferase center. This Shewanella piezotolerans (strain WP3 / JCM 13877) protein is Large ribosomal subunit protein uL6.